The sequence spans 321 residues: Cytochrome c biogenesis protein CcsA (321 aa).

8 helical membrane-spanning segments follow: residues 9–29, 44–64, 71–91, 98–118, 143–163, 225–245, 252–272, and 286–306; these read ILTH…LMNL, GMIA…IYSG, LYES…VPYF, FSAI…SGLL, MLLS…LLVI, VISL…VWAN, WNWD…AIYL, and AIVA…VNLL.

This sequence belongs to the CcmF/CycK/Ccl1/NrfE/CcsA family. In terms of assembly, may interact with Ccs1.

Its subcellular location is the plastid. The protein localises to the chloroplast thylakoid membrane. In terms of biological role, required during biogenesis of c-type cytochromes (cytochrome c6 and cytochrome f) at the step of heme attachment. This is Cytochrome c biogenesis protein CcsA from Acorus calamus var. americanus (American sweet flag).